Reading from the N-terminus, the 516-residue chain is Cytochrome P450 monooxygenase dtxS2 (516 aa).

The chain crosses the membrane as a helical span at residues 23-43 (ILASVIVLLGLKVATILYTAF). N187 carries an N-linked (GlcNAc...) asparagine glycan. A helical membrane pass occupies residues 229–249 (VLVPLLVFPYISWLLVWWLLS). C458 lines the heme pocket.

The protein belongs to the cytochrome P450 family. Heme serves as cofactor.

It is found in the membrane. It participates in secondary metabolite biosynthesis. Functionally, cytochrome P450 monooxygenase; part of the gene cluster that mediates the biosynthesis of destruxins, insecticidal cyclic hexadepsipeptides which induce flaccid paralysis and visceral muscle contraction in insects through targeting the calcium channels and vacuolar-type ATPases. The aldo-keto reductase dtxS3 converts alpha-ketoisocaproic acid from deaminated leucine into alpha-hydroxyisocaproic acid (HIC), which is the first substrate for destruxin assembly by dtxS1. L-aspartate decarboxylase dtxS4 converts aspartic acid into beta-alanine, the last substrate for the destruxin assembly line performed by dtxS1. The nonribosomal peptide synthetase dtxS1 synthesizes destruxins B and B2, whereas the cytochrome P450 monooxygenase dtxS2 is required to convert destruxin B into other destruxin derivatives, including destructins C, D, A and E. Destruxin E-diol (ED) is further produced in a non-enzymatic manner from destruxin E. Destruxins play an important role in virulence and escape from insect host immune defenses. The sequence is that of Cytochrome P450 monooxygenase dtxS2 from Metarhizium robertsii (strain ARSEF 23 / ATCC MYA-3075) (Metarhizium anisopliae (strain ARSEF 23)).